Reading from the N-terminus, the 176-residue chain is Putative ribosomal protein eS10-like (176 aa).

Positions 104–176 (TLHRSRPETG…CGRGRGQPPQ (73 aa)) are disordered. Positions 108 to 139 (SRPETGRPRPKGLEGKRPARLTRREADRDTYR) are enriched in basic and acidic residues.

The protein belongs to the eukaryotic ribosomal protein eS10 family.

The sequence is that of Putative ribosomal protein eS10-like (RPS10P5) from Homo sapiens (Human).